The primary structure comprises 152 residues: 3-hydroxyacyl-[acyl-carrier-protein] dehydratase FabZ (152 aa).

H57 is an active-site residue.

It belongs to the thioester dehydratase family. FabZ subfamily.

The protein localises to the cytoplasm. It catalyses the reaction a (3R)-hydroxyacyl-[ACP] = a (2E)-enoyl-[ACP] + H2O. In terms of biological role, involved in unsaturated fatty acids biosynthesis. Catalyzes the dehydration of short chain beta-hydroxyacyl-ACPs and long chain saturated and unsaturated beta-hydroxyacyl-ACPs. This Bradyrhizobium sp. (strain ORS 278) protein is 3-hydroxyacyl-[acyl-carrier-protein] dehydratase FabZ.